A 204-amino-acid polypeptide reads, in one-letter code: Endothelin-3 (204 aa).

The N-terminal stretch at 1–17 (MELRLWFLFGLTVTSAA) is a signal peptide. A disordered region spans residues 18-71 (GPVPRPQPGDAGRSGVPRAPSATKETMAMVATRGPSPRSSGQEQEPGPFGELAA). The propeptide occupies 18-80 (GPVPRPQPGD…AKGGPVRYRA (63 aa)). 2 disulfide bridges follow: Cys-83-Cys-97 and Cys-85-Cys-93. A propeptide spanning residues 104 to 204 (INTPERTVPY…KSRTDKARRL (101 aa)) is cleaved from the precursor. A disordered region spans residues 115-140 (LSNHRGSVRGRRSAGPSPQSSQPSRG). Positions 127–140 (SAGPSPQSSQPSRG) are enriched in low complexity. Residues 144 to 158 (CACAESQDRACVYFC) form an endothelin-like region. Residues 166–204 (GASRTPETPDKEAGKPAGRATGGLHPRRLKSRTDKARRL) form a disordered region.

The protein belongs to the endothelin/sarafotoxin family.

It is found in the secreted. Functionally, endothelins are endothelium-derived vasoconstrictor peptides. The protein is Endothelin-3 (EDN3) of Sus scrofa (Pig).